The primary structure comprises 225 residues: Small ribosomal subunit protein uS7 (225 aa).

Serine 2 carries the post-translational modification N-acetylserine. Threonine 27 carries the post-translational modification Phosphothreonine. Glycyl lysine isopeptide (Lys-Gly) (interchain with G-Cter in ubiquitin) cross-links involve residues lysine 45 and lysine 203.

The protein belongs to the universal ribosomal protein uS7 family. In terms of assembly, component of the small ribosomal subunit (SSU). Mature yeast ribosomes consist of a small (40S) and a large (60S) subunit. The 40S small subunit contains 1 molecule of ribosomal RNA (18S rRNA) and 33 different proteins (encoded by 57 genes). The large 60S subunit contains 3 rRNA molecules (25S, 5.8S and 5S rRNA) and 46 different proteins (encoded by 81 genes). Post-translationally, N-terminally acetylated by acetyltransferase NatA.

The protein resides in the cytoplasm. Its function is as follows. Component of the ribosome, a large ribonucleoprotein complex responsible for the synthesis of proteins in the cell. The small ribosomal subunit (SSU) binds messenger RNAs (mRNAs) and translates the encoded message by selecting cognate aminoacyl-transfer RNA (tRNA) molecules. The large subunit (LSU) contains the ribosomal catalytic site termed the peptidyl transferase center (PTC), which catalyzes the formation of peptide bonds, thereby polymerizing the amino acids delivered by tRNAs into a polypeptide chain. The nascent polypeptides leave the ribosome through a tunnel in the LSU and interact with protein factors that function in enzymatic processing, targeting, and the membrane insertion of nascent chains at the exit of the ribosomal tunnel. This Saccharomyces cerevisiae (strain ATCC 204508 / S288c) (Baker's yeast) protein is Small ribosomal subunit protein uS7.